A 716-amino-acid polypeptide reads, in one-letter code: uncharacterized protein (716 aa).

Disordered regions lie at residues 84–103 (SPSI…ERYP) and 153–189 (VTDE…SQTQ). Position 97 is a phosphoserine (Ser97). Glycyl lysine isopeptide (Lys-Gly) (interchain with G-Cter in SUMO2) cross-links involve residues Lys201, Lys204, Lys237, Lys283, and Lys626.

This is an uncharacterized protein from Homo sapiens (Human).